A 166-amino-acid polypeptide reads, in one-letter code: Regulatory protein RecX (166 aa).

Belongs to the RecX family.

It is found in the cytoplasm. Functionally, modulates RecA activity. This is Regulatory protein RecX from Shigella boydii serotype 18 (strain CDC 3083-94 / BS512).